Consider the following 270-residue polypeptide: Type III pantothenate kinase (270 aa).

11-18 provides a ligand contact to ATP; the sequence is DAGNSRIK. Substrate-binding positions include Tyr-96 and 103-106; that span reads GSDR. The Proton acceptor role is filled by Asp-105. Thr-129 serves as a coordination point for ATP. A substrate-binding site is contributed by Thr-195.

This sequence belongs to the type III pantothenate kinase family. As to quaternary structure, homodimer. Requires NH4(+) as cofactor. It depends on K(+) as a cofactor.

The protein resides in the cytoplasm. It catalyses the reaction (R)-pantothenate + ATP = (R)-4'-phosphopantothenate + ADP + H(+). Its pathway is cofactor biosynthesis; coenzyme A biosynthesis; CoA from (R)-pantothenate: step 1/5. Its function is as follows. Catalyzes the phosphorylation of pantothenate (Pan), the first step in CoA biosynthesis. This Paraburkholderia phytofirmans (strain DSM 17436 / LMG 22146 / PsJN) (Burkholderia phytofirmans) protein is Type III pantothenate kinase.